A 320-amino-acid polypeptide reads, in one-letter code: Ferrochelatase (320 aa).

Residues His-194 and Glu-275 each coordinate Fe cation.

Belongs to the ferrochelatase family. As to quaternary structure, monomer.

It localises to the cytoplasm. It carries out the reaction heme b + 2 H(+) = protoporphyrin IX + Fe(2+). Its pathway is porphyrin-containing compound metabolism; protoheme biosynthesis; protoheme from protoporphyrin-IX: step 1/1. Its function is as follows. Catalyzes the ferrous insertion into protoporphyrin IX. This is Ferrochelatase from Shigella dysenteriae serotype 1 (strain Sd197).